The following is a 451-amino-acid chain: Chromosomal replication initiator protein DnaA (451 aa).

Positions 1–71 are domain I, interacts with DnaA modulators; the sequence is MSEKEIWDKV…QAIIYDVIGY (71 aa). The domain II stretch occupies residues 71–112; the sequence is YEVKPHFISEDELASYNNVNTQEVQEPQVQHSSIDDKTWGKE. The interval 113–329 is domain III, AAA+ region; that stretch reads QFNMHNTFDT…GALTRLLAYS (217 aa). Residues glycine 157, glycine 159, lysine 160, and threonine 161 each coordinate ATP. Positions 330 to 451 are domain IV, binds dsDNA; that stretch reads KLQGKPITTE…ENLEKEIRNQ (122 aa).

This sequence belongs to the DnaA family. Oligomerizes as a right-handed, spiral filament on DNA at oriC.

It localises to the cytoplasm. Its function is as follows. Plays an essential role in the initiation and regulation of chromosomal replication. ATP-DnaA binds to the origin of replication (oriC) to initiate formation of the DNA replication initiation complex once per cell cycle. Binds the DnaA box (a 9 base pair repeat at the origin) and separates the double-stranded (ds)DNA. Forms a right-handed helical filament on oriC DNA; dsDNA binds to the exterior of the filament while single-stranded (ss)DNA is stabiized in the filament's interior. The ATP-DnaA-oriC complex binds and stabilizes one strand of the AT-rich DNA unwinding element (DUE), permitting loading of DNA polymerase. After initiation quickly degrades to an ADP-DnaA complex that is not apt for DNA replication. Binds acidic phospholipids. This Staphylococcus epidermidis (strain ATCC 12228 / FDA PCI 1200) protein is Chromosomal replication initiator protein DnaA.